The sequence spans 128 residues: CD59 glycoprotein (128 aa).

The N-terminal stretch at 1–25 is a signal peptide; that stretch reads MGIQGGSVLFGLLLILAVFCHSGHS. One can recognise a UPAR/Ly6 domain in the interval 26 to 108; the sequence is LQCYSCPYST…ILENGGTTLS (83 aa). 5 disulfide bridges follow: cysteine 28–cysteine 51, cysteine 31–cysteine 38, cysteine 44–cysteine 64, cysteine 70–cysteine 88, and cysteine 89–cysteine 94. Asparagine 43 carries N-linked (GlcNAc...) asparagine glycosylation. A lipid anchor (GPI-anchor amidated asparagine) is attached at asparagine 102. A propeptide spans 103–128 (removed in mature form); that stretch reads GGTTLSKKTVLLLVTPFLAAAWSLHP.

Interacts with T-cell surface antigen CD2. Post-translationally, N- and O-glycosylated.

The protein resides in the cell membrane. Its subcellular location is the secreted. Its function is as follows. Potent inhibitor of the complement membrane attack complex (MAC) action, which protects self-cells from damage during complement activation. Acts by binding to the beta-haipins of C8 (C8A and C8B) components of the assembling MAC, forming an intermolecular beta-sheet that prevents incorporation of the multiple copies of C9 required for complete formation of the osmolytic pore. This Callithrix sp. (Marmoset) protein is CD59 glycoprotein.